A 429-amino-acid polypeptide reads, in one-letter code: Adenylosuccinate synthetase (429 aa).

GTP-binding positions include 12-18 and 40-42; these read GDEGKGK and GHT. Aspartate 13 (proton acceptor) is an active-site residue. Mg(2+)-binding residues include aspartate 13 and glycine 40. IMP is bound by residues 13–16, 38–41, threonine 128, arginine 142, glutamine 223, threonine 238, and arginine 302; these read DEGK and NAGH. The active-site Proton donor is histidine 41. 298-304 lines the substrate pocket; sequence VNTGRKR. GTP-binding positions include arginine 304, 330–332, and 412–414; these read KLD and GVG.

It belongs to the adenylosuccinate synthetase family. In terms of assembly, homodimer. Mg(2+) is required as a cofactor.

Its subcellular location is the cytoplasm. The catalysed reaction is IMP + L-aspartate + GTP = N(6)-(1,2-dicarboxyethyl)-AMP + GDP + phosphate + 2 H(+). It participates in purine metabolism; AMP biosynthesis via de novo pathway; AMP from IMP: step 1/2. Its function is as follows. Plays an important role in the de novo pathway of purine nucleotide biosynthesis. Catalyzes the first committed step in the biosynthesis of AMP from IMP. This is Adenylosuccinate synthetase from Corynebacterium jeikeium (strain K411).